The following is a 538-amino-acid chain: MAVISKKIPAPDKVEIKTALLSVFDKTGIVELAQALSEQGVRLLSTGGTYKAIAAAGLAVTDVSEITGFPEIMDGRVKTLHPTVHGGLLAIRDDSEHQEAMKTHGIEAIDLAVINLYPFEDVRAAGGDYPTTVENIDIGGPAMIRASAKNHAYVTILTDPNDYAEFTEQLSADGGKTAYAFRQRMAAKAYARTAAYDAVISNWFAEALSIDTPRHRVIGGALKEEMRYGENPHQKAAFYVTGEKRPGVSTAALLQGKQLSYNNINDTDAAYELVAEFLPEKEPACAIIKHANPCGVATGSSLVEAYRRALACDSVSAFGGIIALNRTLDAETAEEIVKLFTEVIIAPDVTEEAKAIIARKPNLRLLSAGGLPDPRAAGLTAKTVSGGLLVQSRDNGMVEDLELKVVTKRAPTAQELDDMKFAFKIGKHVKSNAVVYAKDGQTAGIGAGQMSRVDSARIAALKAEEAAKALGLAVPMTHGSAVASEAFLPFADGLLSMIAAGATAVIQPGGSMRDQEVIDAADEHGIAMVFTGMRHFRH.

Residues 8–158 form the MGS-like domain; the sequence is IPAPDKVEIK…KNHAYVTILT (151 aa).

Belongs to the PurH family.

The catalysed reaction is (6R)-10-formyltetrahydrofolate + 5-amino-1-(5-phospho-beta-D-ribosyl)imidazole-4-carboxamide = 5-formamido-1-(5-phospho-D-ribosyl)imidazole-4-carboxamide + (6S)-5,6,7,8-tetrahydrofolate. It carries out the reaction IMP + H2O = 5-formamido-1-(5-phospho-D-ribosyl)imidazole-4-carboxamide. It participates in purine metabolism; IMP biosynthesis via de novo pathway; 5-formamido-1-(5-phospho-D-ribosyl)imidazole-4-carboxamide from 5-amino-1-(5-phospho-D-ribosyl)imidazole-4-carboxamide (10-formyl THF route): step 1/1. The protein operates within purine metabolism; IMP biosynthesis via de novo pathway; IMP from 5-formamido-1-(5-phospho-D-ribosyl)imidazole-4-carboxamide: step 1/1. The chain is Bifunctional purine biosynthesis protein PurH from Rhizobium leguminosarum bv. trifolii (strain WSM2304).